Reading from the N-terminus, the 148-residue chain is MLDVVEIQKILPHRYPFLLVDRVVELEKGKSVKAYKNVSISEPVFEGHFPGHPIYPGVMIIEGMAQAGGVLAFLSSSEEEQEAAKDKVVYFMSIDKAKFRNPVRPGDKLEYHLEVIKHRGSIWVLDGKAYVDGNLVAEAELKAMIVDK.

Histidine 48 is a catalytic residue.

It belongs to the thioester dehydratase family. FabZ subfamily.

The protein localises to the cytoplasm. The enzyme catalyses a (3R)-hydroxyacyl-[ACP] = a (2E)-enoyl-[ACP] + H2O. Involved in unsaturated fatty acids biosynthesis. Catalyzes the dehydration of short chain beta-hydroxyacyl-ACPs and long chain saturated and unsaturated beta-hydroxyacyl-ACPs. The sequence is that of 3-hydroxyacyl-[acyl-carrier-protein] dehydratase FabZ from Nitratiruptor sp. (strain SB155-2).